The chain runs to 408 residues: Potassium channel subfamily K member 13 (408 aa).

The Cytoplasmic portion of the chain corresponds to 1 to 19 (MAGRGFSWGPGHLNEDNAR). Residues 20–40 (FLLLAALIVLYLLGGAAVFSA) form a helical membrane-spanning segment. N-linked (GlcNAc...) asparagine glycosylation is found at asparagine 59 and asparagine 65. The pore-forming intramembrane region spans 95-115 (WDFTGAFYFVGTVVSTIGFGM). 3 residues coordinate K(+): threonine 110, isoleucine 111, and glycine 112. Residues 110 to 115 (TIGFGM) are selectivity filter 1. A helical transmembrane segment spans residues 125-145 (IFLIFYGLVGCSSTILFFNLF). Topologically, residues 146–193 (LERLITIIAYIMKSCHQRQLRRRGALPQESLKDAGQCEVDSLAGWKPS) are cytoplasmic. A helical membrane pass occupies residues 194–214 (VYYVMLILCTASILISCCASA). An intramembrane region (pore-forming) is located at residues 224 to 244 (YFDSLYFCFVAFSTIGFGDLV). Residues threonine 237, isoleucine 238, glycine 239, and phenylalanine 240 each contribute to the K(+) site. The selectivity filter 2 stretch occupies residues 237-242 (TIGFGD). The helical transmembrane segment at 263–283 (VFILMGVCCIYSLFNVISILI) threads the bilayer. The Cytoplasmic portion of the chain corresponds to 284 to 408 (KQSLNWILRK…NRLAETSGDR (125 aa)).

It belongs to the two pore domain potassium channel (TC 1.A.1.8) family. In terms of assembly, homodimer. Heterodimer with KCNK12. In terms of tissue distribution, expressed in microglia (at protein level).

It localises to the cell membrane. It catalyses the reaction K(+)(in) = K(+)(out). The channel conductance is activated by arachidonic acid and inhibited by Ba(2+) ions, volatile anesthetics such as halothane and antiarrhythmic drugs mexiletine and lidocaine. Insensitive to extracellular pH change. In terms of biological role, k(+) channel that conducts outward rectifying tonic currents potentiated by purinergic signals. Homo- and heterodimerizes to form functional channels with distinct regulatory and gating properties. Contributes most of K(+) currents at the plasma membrane of resting microglia. Maintains a depolarized membrane potential required for proper ramified microglia morphology and phagocytosis, selectively mediating microglial pruning of presynaptic compartments at hippocampal excitatory synapses. Upon local release of ATP caused by neuronal injury or infection, it is potentiated by P2RY12 and P2RX7 receptor signaling and contributes to ATP-triggered K(+) efflux underlying microglial NLRP3 inflammasome assembly and IL1B release. This chain is Potassium channel subfamily K member 13, found in Homo sapiens (Human).